Reading from the N-terminus, the 93-residue chain is UPF0147 protein PH1921.2 (93 aa).

This sequence belongs to the UPF0147 family.

The protein is UPF0147 protein PH1921.2 of Pyrococcus horikoshii (strain ATCC 700860 / DSM 12428 / JCM 9974 / NBRC 100139 / OT-3).